We begin with the raw amino-acid sequence, 172 residues long: Small ribosomal subunit protein uS5 (172 aa).

The S5 DRBM domain occupies 17–80; sequence LREKMIAVNR…EEARRNMVKV (64 aa).

Belongs to the universal ribosomal protein uS5 family. In terms of assembly, part of the 30S ribosomal subunit. Contacts proteins S4 and S8.

With S4 and S12 plays an important role in translational accuracy. Functionally, located at the back of the 30S subunit body where it stabilizes the conformation of the head with respect to the body. This is Small ribosomal subunit protein uS5 from Verminephrobacter eiseniae (strain EF01-2).